Consider the following 297-residue polypeptide: Homoserine kinase (297 aa).

Position 79–89 (79–89 (PIARGLGSSGA)) interacts with ATP.

This sequence belongs to the GHMP kinase family. Homoserine kinase subfamily.

Its subcellular location is the cytoplasm. The catalysed reaction is L-homoserine + ATP = O-phospho-L-homoserine + ADP + H(+). Its pathway is amino-acid biosynthesis; L-threonine biosynthesis; L-threonine from L-aspartate: step 4/5. Its function is as follows. Catalyzes the ATP-dependent phosphorylation of L-homoserine to L-homoserine phosphate. This is Homoserine kinase from Pyrobaculum aerophilum (strain ATCC 51768 / DSM 7523 / JCM 9630 / CIP 104966 / NBRC 100827 / IM2).